A 369-amino-acid chain; its full sequence is Quinolinate synthase (369 aa).

Iminosuccinate is bound by residues H47 and S64. Position 111 (C111) interacts with [4Fe-4S] cluster. Residues 142 to 144 and S163 each bind iminosuccinate; that span reads YVN. C231 provides a ligand contact to [4Fe-4S] cluster. Iminosuccinate-binding positions include 257–259 and T274; that span reads HPE. A [4Fe-4S] cluster-binding site is contributed by C321.

This sequence belongs to the quinolinate synthase family. Type 3 subfamily. The cofactor is [4Fe-4S] cluster.

It is found in the cytoplasm. The enzyme catalyses iminosuccinate + dihydroxyacetone phosphate = quinolinate + phosphate + 2 H2O + H(+). The protein operates within cofactor biosynthesis; NAD(+) biosynthesis; quinolinate from iminoaspartate: step 1/1. In terms of biological role, catalyzes the condensation of iminoaspartate with dihydroxyacetone phosphate to form quinolinate. This chain is Quinolinate synthase, found in Bacillus licheniformis (strain ATCC 14580 / DSM 13 / JCM 2505 / CCUG 7422 / NBRC 12200 / NCIMB 9375 / NCTC 10341 / NRRL NRS-1264 / Gibson 46).